Here is a 514-residue protein sequence, read N- to C-terminus: 2,3-bisphosphoglycerate-independent phosphoglycerate mutase (514 aa).

Asp14 and Ser64 together coordinate Mn(2+). Ser64 serves as the catalytic Phosphoserine intermediate. Substrate is bound by residues His125, 155–156 (RD), Arg187, Arg193, 263–266 (RADR), and Lys336. 5 residues coordinate Mn(2+): Asp403, His407, Asp444, His445, and His463.

The protein belongs to the BPG-independent phosphoglycerate mutase family. In terms of assembly, monomer. Mn(2+) is required as a cofactor.

It carries out the reaction (2R)-2-phosphoglycerate = (2R)-3-phosphoglycerate. It participates in carbohydrate degradation; glycolysis; pyruvate from D-glyceraldehyde 3-phosphate: step 3/5. Functionally, catalyzes the interconversion of 2-phosphoglycerate and 3-phosphoglycerate. The chain is 2,3-bisphosphoglycerate-independent phosphoglycerate mutase from Shewanella denitrificans (strain OS217 / ATCC BAA-1090 / DSM 15013).